We begin with the raw amino-acid sequence, 363 residues long: MEPRVSVAEAVSSLTIADAFVRACVGPAPPRPALPSRFICSFPDCSASYNKAWKLDAHLCKHTGERPFVCDYEGCGKAFIRDYHLSRHILIHTGEKPFVCADNGCNQKFSTKSNLKKHIERKHENPQKQYVCNFEGCKKAFKKHQQLRTHQCQHTNEPLFRCTHEGCGKHFASPSRLKRHGKVHEGYLCQKGCSFVGKTWTELLKHTREAHKEEVTCTVCQKMFKRKDHLKQHMKTHAPERDVYRCPREGCARTYTTVFNLQSHILSFHEEKRPFVCEHAGCGKTFAMKQSLMRHSVVHDPDKKRMKLKVRPPRERRSLASRLSGYVPPKGKQEPDCSLPNSTESSSSPEATMLAPAALLTVH.

9 consecutive C2H2-type zinc fingers follow at residues 38-62 (FICS…LCKH), 68-92 (FVCD…ILIH), 98-123 (FVCA…ERKH), 130-154 (YVCN…QCQH), 160-184 (FRCT…GKVH), 187-211 (YLCQ…REAH), 215-237 (VTCT…MKTH), 244-269 (YRCP…LSFH), and 275-299 (FVCE…SVVH). Positions 301-363 (PDKKRMKLKV…LAPAALLTVH (63 aa)) are disordered. Residues 338-350 (SLPNSTESSSSPE) show a composition bias toward low complexity.

Its subcellular location is the nucleus. Its function is as follows. Involved in ribosomal large subunit biogenesis. Binds the approximately 50 base pairs internal control region (ICR) of 5S ribosomal RNA genes. It is required for their RNA polymerase III-dependent transcription and may also maintain the transcription of other genes. Also binds the transcribed 5S RNA's. The sequence is that of Transcription factor IIIA (Gtf3a) from Rattus norvegicus (Rat).